Consider the following 756-residue polypeptide: Xylosyl- and glucuronyltransferase LARGE1 (756 aa).

Residues 1-10 lie on the Cytoplasmic side of the membrane; that stretch reads MLGICRGRRK. A helical; Signal-anchor for type II membrane protein transmembrane segment spans residues 11 to 31; sequence FLAASLTVLFVPAVTWIYLFA. Residues 32–756 lie on the Lumenal side of the membrane; the sequence is GSFEDGKPVS…LKYLTAENNS (725 aa). Disordered stretches follow at residues 42–63 and 81–109; these read LSPL…RDRE and KQLS…EGTG. Positions 44 to 58 are enriched in polar residues; sequence PLESQPHSPRYTASS. Residues 55–90 are a coiled coil; the sequence is TASSQRDRESLEVRMREVEEENRVLRKQLSLAQGRS. N-linked (GlcNAc...) asparagine glycosylation is found at N97, N122, and N148. The tract at residues 138-413 is xylosyltransferase activity; it reads IHVAIVCAGY…FLEYDGNLLR (276 aa). 2 residues coordinate Mn(2+): D242 and D244. N272 carries N-linked (GlcNAc...) asparagine glycosylation. Positions 414–756 are glucuronyltransferase activity; sequence RELFGCPSEA…LKYLTAENNS (343 aa). 2 residues coordinate Mn(2+): D563 and D565.

In the C-terminal section; belongs to the glycosyltransferase 49 family. This sequence in the N-terminal section; belongs to the glycosyltransferase 8 family. The cofactor is Mn(2+).

The protein resides in the golgi apparatus membrane. The enzyme catalyses 3-O-[beta-D-GlcA-(1-&gt;3)-beta-D-Xyl-(1-&gt;4)-Rib-ol-P-Rib-ol-P-3-beta-D-GalNAc-(1-&gt;3)-beta-D-GlcNAc-(1-&gt;4)-(O-6-P-alpha-D-Man)]-Thr-[protein] + UDP-alpha-D-xylose = 3-O-[alpha-D-Xyl-(1-&gt;3)-beta-D-GlcA-(1-&gt;4)-beta-D-Xyl-(1-&gt;4)-Rib-ol-P-Rib-ol-P-3-beta-D-GalNAc-(1-&gt;3)-beta-D-GlcNAc-(1-&gt;4)-(O-6-P-alpha-D-Man)]-Thr-[protein] + UDP + H(+). It carries out the reaction 3-O-{(1-&gt;[3)-alpha-D-Xyl-(1-&gt;3)-beta-D-GlcA-(1-&gt;](n)-4)-beta-D-Xyl-(1-&gt;4)-Rib-ol-P-Rib-ol-P-3-beta-D-GalNAc-(1-&gt;3)-beta-D-GlcNAc-(1-&gt;4)-O-6-P-alpha-D-Man}-L-Thr-[protein] + UDP-alpha-D-glucuronate = 3-O-{beta-D-GlcA-(1-&gt;[3)-alpha-D-Xyl-(1-&gt;3)-beta-D-GlcA-(1-&gt;](n)-4)-beta-D-Xyl-(1-&gt;4)-Rib-ol-P-Rib-ol-P-3-beta-D-GalNAc-(1-&gt;3)-beta-D-GlcNAc-(1-&gt;4)-O-6-P-alpha-D-Man}-L-Thr-[protein] + UDP + H(+). It catalyses the reaction 3-O-{beta-D-GlcA-(1-&gt;[3)-alpha-D-Xyl-(1-&gt;3)-beta-D-GlcA-(1-&gt;](n)-4)-beta-D-Xyl-(1-&gt;4)-Rib-ol-P-Rib-ol-P-3-beta-D-GalNAc-(1-&gt;3)-beta-D-GlcNAc-(1-&gt;4)-O-6-P-alpha-D-Man}-L-Thr-[protein] + UDP-alpha-D-xylose = 3-O-{(1-&gt;[3)-alpha-D-Xyl-(1-&gt;3)-beta-D-GlcA-(1-&gt;](n+1)-4)-beta-D-Xyl-(1-&gt;4)-Rib-ol-P-Rib-ol-P-3-beta-D-GalNAc-(1-&gt;3)-beta-D-GlcNAc-(1-&gt;4)-O-6-P-alpha-D-Man}-L-Thr-[protein] + UDP + H(+). It functions in the pathway protein modification; protein glycosylation. Bifunctional glycosyltransferase with both alpha-1,3-xylosyltransferase and beta-1,3-glucuronyltransferase activities involved in the maturation of alpha-dystroglycan (DAG1) by glycosylation leading to DAG1 binding to laminin G-like domain-containing extracellular proteins with high affinity. Elongates the glucuronyl-beta-1,4-xylose-beta disaccharide primer structure initiated by B4GAT1 by adding repeating units [-3-Xylose-alpha-1,3-GlcA-beta-1-] to produce a heteropolysaccharide. Requires the phosphorylation of core M3 (O-mannosyl trisaccharide) by POMK to elongate the glucuronyl-beta-1,4-xylose-beta disaccharide primer. Plays a key role in skeletal muscle function and regeneration. The protein is Xylosyl- and glucuronyltransferase LARGE1 of Gallus gallus (Chicken).